The primary structure comprises 645 residues: Envelope glycoprotein (645 aa).

The signal sequence occupies residues 1 to 33; that stretch reads MESPAFSKPLKDKINPWGPLIIMGILVRAGASV. The receptor-binding domain (RBD) stretch occupies residues 32–237; sequence SVQRDSPHQV…QVLNVGPRVP (206 aa). The Extracellular portion of the chain corresponds to 34–585; sequence QRDSPHQVFN…FNRSPWFTTL (552 aa). 2 N-linked (GlcNAc...) asparagine; by host glycosylation sites follow: N43 and N58. 2 cysteine pairs are disulfide-bonded: C113–C130 and C122–C135. A disordered region spans residues 260 to 285; sequence RTPRPPPSGAASMVPGAPPPSQQPGT. N301 carries an N-linked (GlcNAc...) asparagine; by host glycan. 6 disulfide bridges follow: C311–C314, C311–C538, C341–C395, C360–C372, C402–C415, and C530–C537. A CXXC motif is present at residues 311–314; sequence CWLC. 2 N-linked (GlcNAc...) asparagine; by host glycosylation sites follow: N333 and N340. N-linked (GlcNAc...) asparagine; by host glycosylation is found at N373 and N409. A fusion peptide region spans residues 447 to 467; that stretch reads VSLTLALLLGGLTMGGIAAGV. Positions 490-510 form a coiled coil; the sequence is DLGALEKSVSALEKSLTSLSE. Residues 513–529 are immunosuppression; the sequence is LQNRRGLDLLFLKEGGL. Residues 530–538 carry the CX6CC motif; sequence CAALKEECC. The chain crosses the membrane as a helical span at residues 586–606; it reads ISTIMGPLIVLLLILLFGPCI. C605 is lipidated: S-palmitoyl cysteine; by host. The Cytoplasmic segment spans residues 607–640; the sequence is LNRLVQFVKDRISVVQALVLTQQYHQLKSIDPEE. A YXXL motif; contains endocytosis signal motif is present at residues 630–633; the sequence is YHQL.

The mature envelope protein (Env) consists of a trimer of SU-TM heterodimers attached by a labile interchain disulfide bond. The activated Env consists of SU monomers and TM trimers. Specific enzymatic cleavages in vivo yield mature proteins. Envelope glycoproteins are synthesized as an inactive precursor that is N-glycosylated and processed likely by host cell furin or by a furin-like protease in the Golgi to yield the mature SU and TM proteins. The cleavage site between SU and TM requires the minimal sequence [KR]-X-[KR]-R. The R-peptide is released from the C-terminus of the cytoplasmic tail of the TM protein upon particle formation as a result of proteolytic cleavage by the viral protease. Cleavage of this peptide is required for TM to become fusogenic. In terms of processing, the CXXC motif is highly conserved across a broad range of retroviral envelope proteins. It is thought to participate in the formation of a labile disulfide bond possibly with the CX6CC motif present in the transmembrane protein. Isomerization of the intersubunit disulfide bond to an SU intrachain disulfide bond is thought to occur upon receptor recognition in order to allow membrane fusion. Post-translationally, the transmembrane protein is palmitoylated. The R-peptide is palmitoylated.

It localises to the virion membrane. The protein resides in the host cell membrane. In terms of biological role, the surface protein (SU) attaches the virus to the host cell by binding to its receptor. This interaction activates a thiol in a CXXC motif of the C-terminal domain, where the other Cys residue participates in the formation of the intersubunit disulfide. The activated thiol will attack the disulfide and cause its isomerization into a disulfide isomer within the motif. This leads to SU displacement and TM refolding, and is thought to activate its fusogenic potential by unmasking its fusion peptide. Fusion occurs at the host cell plasma membrane. The transmembrane protein (TM) acts as a class I viral fusion protein. Under the current model, the protein has at least 3 conformational states: pre-fusion native state, pre-hairpin intermediate state, and post-fusion hairpin state. During viral and target cell membrane fusion, the coiled coil regions (heptad repeats) assume a trimer-of-hairpins structure, positioning the fusion peptide in close proximity to the C-terminal region of the ectodomain. The formation of this structure appears to drive apposition and subsequent fusion of viral and target cell membranes. Membranes fusion leads to delivery of the nucleocapsid into the cytoplasm. The chain is Envelope glycoprotein (env) from Homo sapiens (Human).